A 644-amino-acid chain; its full sequence is Biosynthetic arginine decarboxylase (644 aa).

An N6-(pyridoxal phosphate)lysine modification is found at K105. 287–297 (LDVGGGLGIDY) is a binding site for substrate.

The protein belongs to the Orn/Lys/Arg decarboxylase class-II family. SpeA subfamily. Requires Mg(2+) as cofactor. It depends on pyridoxal 5'-phosphate as a cofactor.

It carries out the reaction L-arginine + H(+) = agmatine + CO2. In terms of biological role, catalyzes the biosynthesis of agmatine from arginine. This is Biosynthetic arginine decarboxylase from Parasynechococcus marenigrum (strain WH8102).